The chain runs to 86 residues: Apolipoprotein C-I (86 aa).

The signal sequence occupies residues 1–26 (MRLFLSLPVLVVVLLMILEGPGPAQG).

This sequence belongs to the apolipoprotein C1 family.

The protein localises to the secreted. Its function is as follows. Inhibitor of lipoprotein binding to the low density lipoprotein (LDL) receptor, LDL receptor-related protein, and very low density lipoprotein (VLDL) receptor. Associates with high density lipoproteins (HDL) and the triacylglycerol-rich lipoproteins in the plasma and makes up about 10% of the protein of the VLDL and 2% of that of HDL. Appears to interfere directly with fatty acid uptake and is also the major plasma inhibitor of cholesteryl ester transfer protein (CETP). Binds free fatty acids and reduces their intracellular esterification. Modulates the interaction of APOE with beta-migrating VLDL and inhibits binding of beta-VLDL to the LDL receptor-related protein. The protein is Apolipoprotein C-I (APOC1) of Saimiri boliviensis boliviensis (Bolivian squirrel monkey).